Reading from the N-terminus, the 161-residue chain is Endoribonuclease YbeY (161 aa).

Zn(2+) is bound by residues histidine 127, histidine 131, and histidine 137.

The protein belongs to the endoribonuclease YbeY family. Zn(2+) serves as cofactor.

It is found in the cytoplasm. Functionally, single strand-specific metallo-endoribonuclease involved in late-stage 70S ribosome quality control and in maturation of the 3' terminus of the 16S rRNA. The protein is Endoribonuclease YbeY of Listeria monocytogenes serotype 4b (strain CLIP80459).